The primary structure comprises 347 residues: N-acetyl-gamma-glutamyl-phosphate reductase (347 aa).

Residue cysteine 151 is part of the active site.

Belongs to the NAGSA dehydrogenase family. Type 1 subfamily.

It is found in the cytoplasm. The catalysed reaction is N-acetyl-L-glutamate 5-semialdehyde + phosphate + NADP(+) = N-acetyl-L-glutamyl 5-phosphate + NADPH + H(+). Its pathway is amino-acid biosynthesis; L-arginine biosynthesis; N(2)-acetyl-L-ornithine from L-glutamate: step 3/4. Its function is as follows. Catalyzes the NADPH-dependent reduction of N-acetyl-5-glutamyl phosphate to yield N-acetyl-L-glutamate 5-semialdehyde. This Corynebacterium glutamicum (strain R) protein is N-acetyl-gamma-glutamyl-phosphate reductase.